The sequence spans 456 residues: Keratin, type I cytoskeletal 12 (456 aa).

A compositionally biased stretch (polar residues) spans 1–19 (MSLSVRTSALSRRSSSQNG). The disordered stretch occupies residues 1-25 (MSLSVRTSALSRRSSSQNGVAGRPW). Residues 1–114 (MSLSVRTSAL…GNDGGLLSGS (114 aa)) are head. A coil 1A region spans residues 115-150 (EKETMQNLNDRLASYLGKVRALEEANAELENKIREW). The IF rod domain occupies 115-402 (EKETMQNLND…RLLEGDTQGD (288 aa)). The interval 154–171 (RRTGDSGSQSDYSKYYPL) is linker 1. The segment at 172–263 (IEDLKNKIIS…KNHEEELQSF (92 aa)) is coil 1B. Residues 264–286 (QAGGPGEVNVEMDAAPGVDLTKS) form a linker 12 region. The interval 287 to 397 (GELRKEINSN…IETYRRLLEG (111 aa)) is coil 2. Residues 398–456 (DTQGDGFDESLSLTVSKPQAPSVDSSKDPNKTRKIKTVVQEIVNGEVVSSQVQELEEAM) are tail. A disordered region spans residues 405-430 (DESLSLTVSKPQAPSVDSSKDPNKTR). Residues 408–421 (LSLTVSKPQAPSVD) are compositionally biased toward polar residues.

Belongs to the intermediate filament family. Heterotetramer of two type I and two type II keratins. Keratin-3 associates with keratin-12.

Involved in corneal epithelium organization, integrity and corneal keratin expression. The sequence is that of Keratin, type I cytoskeletal 12 from Rattus norvegicus (Rat).